The sequence spans 497 residues: Iron-sulfur cluster assembly factor IBA57, mitochondrial (497 aa).

The transit peptide at 1–27 directs the protein to the mitochondrion; it reads MFISRRCRIKGFTLKNLLWFRSSSTRF. A disordered region spans residues 414–433; the sequence is PTLNPFTNKPPERTKRKQRP.

The protein belongs to the GcvT family. CAF17/IBA57 subfamily. As to quaternary structure, interacts with CCR4, ISA1 and ISA2.

Its subcellular location is the mitochondrion matrix. In terms of biological role, required for lysine and glutamate prototrophy and mitochondrial genome maintenance. Has a role in the maturation of mitochondrial aconitase-type and radical-SAM Fe/S proteins biotin synthase and lipoic acid synthase. The protein is Iron-sulfur cluster assembly factor IBA57, mitochondrial of Saccharomyces cerevisiae (strain ATCC 204508 / S288c) (Baker's yeast).